The sequence spans 856 residues: Vomeronasal type-2 receptor 116 (856 aa).

Residues 1–18 (MFTLIFLFLFLNIPLLVA) form the signal peptide. Residues 19–586 (DFISPRCFWK…VFLSYEEPLG (568 aa)) lie on the Extracellular side of the membrane. Asparagine 94 is a glycosylation site (N-linked (GlcNAc...) asparagine). Residues 587-607 (VALSLLSLCFSAFTTVVLGIF) form a helical membrane-spanning segment. Residues 608-622 (VKHHNTPIVKANNRT) are Cytoplasmic-facing. The chain crosses the membrane as a helical span at residues 623–643 (LTYLLLISLIFCFLCPLLFIG). The Extracellular portion of the chain corresponds to 644-658 (HPNSATCILQQLTFG). A helical membrane pass occupies residues 659-679 (VVFTVSLSTVLAKTITVVLAF). Over 680 to 690 (KIIASQRMMKY) the chain is Cytoplasmic. A helical transmembrane segment spans residues 691 to 711 (FLISGAINYIIPICILIQVIV). The Extracellular segment spans residues 712–745 (CAVWLRASPPSVDIDAHSEHGQIIIVCHKGSVNA). Residues 746–766 (FYCVLGYLAILAFGSFTLAFL) traverse the membrane as a helical segment. At 767 to 778 (SRNLPGAFNEAK) the chain is on the cytoplasmic side. The helical transmembrane segment at 779–799 (SITFSMLVFCSVWVTFIPVYH) threads the bilayer. Residues 800–806 (STKGKVM) lie on the Extracellular side of the membrane. The helical transmembrane segment at 807–827 (VAVEIFSTLASSAGMLGCIFV) threads the bilayer. Residues 828-856 (PKCYTILFRQDQNSLEMIRVKSSSNVHVS) lie on the Cytoplasmic side of the membrane.

It belongs to the G-protein coupled receptor 3 family. In terms of tissue distribution, expressed in the vomeronasal organ.

It is found in the cell membrane. Its function is as follows. Receptor for the Esp1 pheromone. Mediates the response to Esp1 which enhances female sexual receptive behavior (lordosis) upon male mounting, resulting in successful copulation. This chain is Vomeronasal type-2 receptor 116, found in Mus musculus (Mouse).